We begin with the raw amino-acid sequence, 71 residues long: Small ribosomal subunit protein bS21 (71 aa).

The disordered stretch occupies residues 43–71 (TERKRAKASAVKRHAKKLARENARRTRLY). The span at 46-59 (KRAKASAVKRHAKK) shows a compositional bias: basic residues. Positions 60-71 (LARENARRTRLY) are enriched in basic and acidic residues.

It belongs to the bacterial ribosomal protein bS21 family.

The chain is Small ribosomal subunit protein bS21 from Pectobacterium atrosepticum (strain SCRI 1043 / ATCC BAA-672) (Erwinia carotovora subsp. atroseptica).